Here is a 430-residue protein sequence, read N- to C-terminus: Glutamate-1-semialdehyde 2,1-aminomutase (430 aa).

N6-(pyridoxal phosphate)lysine is present on Lys267.

This sequence belongs to the class-III pyridoxal-phosphate-dependent aminotransferase family. HemL subfamily. In terms of assembly, homodimer. Pyridoxal 5'-phosphate serves as cofactor.

The protein localises to the cytoplasm. It catalyses the reaction (S)-4-amino-5-oxopentanoate = 5-aminolevulinate. It participates in porphyrin-containing compound metabolism; protoporphyrin-IX biosynthesis; 5-aminolevulinate from L-glutamyl-tRNA(Glu): step 2/2. This Thermomicrobium roseum (strain ATCC 27502 / DSM 5159 / P-2) protein is Glutamate-1-semialdehyde 2,1-aminomutase.